The primary structure comprises 181 residues: Heavy metal-associated isoprenylated plant protein 46 (181 aa).

The region spanning Lys-2–Val-71 is the HMA domain. The segment at Val-74 to Pro-121 is disordered. Basic and acidic residues predominate over residues Glu-75–Glu-113. At Cys-178 the chain carries Cysteine methyl ester. A lipid anchor (S-farnesyl cysteine) is attached at Cys-178. Residues Lys-179 to Met-181 constitute a propeptide, removed in mature form.

Belongs to the HIPP family.

In terms of biological role, probable heavy-metal-binding protein. This Arabidopsis thaliana (Mouse-ear cress) protein is Heavy metal-associated isoprenylated plant protein 46.